Consider the following 341-residue polypeptide: B3 domain-containing transcription factor VRN1 (341 aa).

Residues 5 to 98 constitute a DNA-binding region (TF-B3 1); that stretch reads FFHKLIFSST…AFSVYIFNLS (94 aa). The disordered stretch occupies residues 166-223; sequence GPVKAEEPTPTPKIPKKRGRKKKNADPEEINSSAPRDDDPENRSKFYESASARKRTVT. Positions 179–188 are enriched in basic residues; sequence IPKKRGRKKK. A compositionally biased stretch (basic and acidic residues) spans 200-211; that stretch reads PRDDDPENRSKF. The segment at residues 244-338 is a DNA-binding region (TF-B3 2); it reads FRVVLRPSYL…VLKVTAFRVN (95 aa).

In terms of tissue distribution, expressed in roots and at lower levels in aerial parts.

The protein localises to the nucleus. Functionally, essential protein. Involved in the regulation of vernalization. Acts as a transcriptional repressor of FLC, a major target of the vernalization pathway. Binds DNA in vitro in a non-sequence-specific manner. This chain is B3 domain-containing transcription factor VRN1, found in Arabidopsis thaliana (Mouse-ear cress).